Here is a 141-residue protein sequence, read N- to C-terminus: Hemoglobin subunit alpha (141 aa).

One can recognise a Globin domain in the interval 1–141 (VLSPEDKNHV…VSTVLTSKYR (141 aa)). Ser-3 carries the post-translational modification Phosphoserine. An N6-succinyllysine modification is found at Lys-7. N6-acetyllysine; alternate is present on Lys-16. Residue Lys-16 is modified to N6-succinyllysine; alternate. A Phosphotyrosine modification is found at Tyr-24. Ser-35 is modified (phosphoserine). Lys-40 bears the N6-succinyllysine mark. Ser-49 is modified (phosphoserine). An O2-binding site is contributed by His-58. His-87 contacts heme b. Ser-102 carries the phosphoserine modification. Phosphothreonine is present on Thr-108. Phosphoserine is present on residues Ser-124 and Ser-131. 2 positions are modified to phosphothreonine: Thr-134 and Thr-137. Ser-138 carries the post-translational modification Phosphoserine.

Belongs to the globin family. In terms of assembly, heterotetramer of two alpha chains and two beta chains. Red blood cells.

Involved in oxygen transport from the lung to the various peripheral tissues. Its function is as follows. Hemopressin acts as an antagonist peptide of the cannabinoid receptor CNR1. Hemopressin-binding efficiently blocks cannabinoid receptor CNR1 and subsequent signaling. The chain is Hemoglobin subunit alpha (HBA) from Spalax ehrenbergi (Middle East blind mole rat).